A 568-amino-acid polypeptide reads, in one-letter code: 2-succinyl-5-enolpyruvyl-6-hydroxy-3-cyclohexene-1-carboxylate synthase (568 aa).

This sequence belongs to the TPP enzyme family. MenD subfamily. Homodimer. Requires Mg(2+) as cofactor. It depends on Mn(2+) as a cofactor. Thiamine diphosphate serves as cofactor.

It catalyses the reaction isochorismate + 2-oxoglutarate + H(+) = 5-enolpyruvoyl-6-hydroxy-2-succinyl-cyclohex-3-ene-1-carboxylate + CO2. The protein operates within quinol/quinone metabolism; 1,4-dihydroxy-2-naphthoate biosynthesis; 1,4-dihydroxy-2-naphthoate from chorismate: step 2/7. It participates in quinol/quinone metabolism; menaquinone biosynthesis. Its function is as follows. Catalyzes the thiamine diphosphate-dependent decarboxylation of 2-oxoglutarate and the subsequent addition of the resulting succinic semialdehyde-thiamine pyrophosphate anion to isochorismate to yield 2-succinyl-5-enolpyruvyl-6-hydroxy-3-cyclohexene-1-carboxylate (SEPHCHC). The chain is 2-succinyl-5-enolpyruvyl-6-hydroxy-3-cyclohexene-1-carboxylate synthase from Actinobacillus pleuropneumoniae serotype 7 (strain AP76).